Here is a 103-residue protein sequence, read N- to C-terminus: NADH-quinone oxidoreductase subunit K 2 (103 aa).

Helical transmembrane passes span 7–27 (LAWY…GFMI), 31–51 (IITI…TFVA), and 63–83 (IFVF…LGII).

It belongs to the complex I subunit 4L family. NDH-1 is composed of 14 different subunits. Subunits NuoA, H, J, K, L, M, N constitute the membrane sector of the complex.

The protein resides in the cell inner membrane. The catalysed reaction is a quinone + NADH + 5 H(+)(in) = a quinol + NAD(+) + 4 H(+)(out). In terms of biological role, NDH-1 shuttles electrons from NADH, via FMN and iron-sulfur (Fe-S) centers, to quinones in the respiratory chain. The immediate electron acceptor for the enzyme in this species is believed to be ubiquinone. Couples the redox reaction to proton translocation (for every two electrons transferred, four hydrogen ions are translocated across the cytoplasmic membrane), and thus conserves the redox energy in a proton gradient. The chain is NADH-quinone oxidoreductase subunit K 2 from Koribacter versatilis (strain Ellin345).